Here is a 256-residue protein sequence, read N- to C-terminus: 5'-nucleotidase SurE (256 aa).

Residues Asp-8, Asp-9, Ser-42, and Asn-94 each coordinate a divalent metal cation.

Belongs to the SurE nucleotidase family. It depends on a divalent metal cation as a cofactor.

The protein localises to the cytoplasm. It carries out the reaction a ribonucleoside 5'-phosphate + H2O = a ribonucleoside + phosphate. In terms of biological role, nucleotidase that shows phosphatase activity on nucleoside 5'-monophosphates. The protein is 5'-nucleotidase SurE of Ehrlichia chaffeensis (strain ATCC CRL-10679 / Arkansas).